Consider the following 273-residue polypeptide: MSNPVVLNLHLISDSTCETVAAVARSALEHFKSVEVNEFVWSCINSYEQIDKIMLTIEKDKYNFIMYTMFDDDIRKYLKQKAGIHEIPCIPILSHVIREISCYLNIKKDPYINTSIGLDDEYFTRIDAINYTIAHDDGQNLWDIDQADIIILGVSRTSKSPTSIYLAYRGYRVVNIPLINSIELSVDLSKMKNKLIVGLTIDIDRLIEIRRARLVSMKNQNNYGYVDYEHVLMEIRETKRICAKNGWPIIDVTQKSVEEIAATIIQYFTKMQH.

An ADP-binding site is contributed by 153-160 (GVSRTSKS).

This sequence belongs to the pyruvate, phosphate/water dikinase regulatory protein family. PDRP subfamily.

The enzyme catalyses N(tele)-phospho-L-histidyl/L-threonyl-[pyruvate, phosphate dikinase] + ADP = N(tele)-phospho-L-histidyl/O-phospho-L-threonyl-[pyruvate, phosphate dikinase] + AMP + H(+). The catalysed reaction is N(tele)-phospho-L-histidyl/O-phospho-L-threonyl-[pyruvate, phosphate dikinase] + phosphate + H(+) = N(tele)-phospho-L-histidyl/L-threonyl-[pyruvate, phosphate dikinase] + diphosphate. Bifunctional serine/threonine kinase and phosphorylase involved in the regulation of the pyruvate, phosphate dikinase (PPDK) by catalyzing its phosphorylation/dephosphorylation. In Ehrlichia ruminantium (strain Gardel), this protein is Putative pyruvate, phosphate dikinase regulatory protein.